Here is a 58-residue protein sequence, read N- to C-terminus: Small ribosomal subunit protein bS21 (58 aa).

Belongs to the bacterial ribosomal protein bS21 family.

The protein is Small ribosomal subunit protein bS21 of Staphylococcus aureus (strain bovine RF122 / ET3-1).